The chain runs to 264 residues: S-adenosylmethionine decarboxylase proenzyme (264 aa).

Serine 112 (schiff-base intermediate with substrate; via pyruvic acid) is an active-site residue. Serine 112 is modified (pyruvic acid (Ser); by autocatalysis). Histidine 117 acts as the Proton acceptor; for processing activity in catalysis. Cysteine 140 (proton donor; for catalytic activity) is an active-site residue.

This sequence belongs to the prokaryotic AdoMetDC family. Type 2 subfamily. As to quaternary structure, heterooctamer of four alpha and four beta chains arranged as a tetramer of alpha/beta heterodimers. The cofactor is pyruvate. Post-translationally, is synthesized initially as an inactive proenzyme. Formation of the active enzyme involves a self-maturation process in which the active site pyruvoyl group is generated from an internal serine residue via an autocatalytic post-translational modification. Two non-identical subunits are generated from the proenzyme in this reaction, and the pyruvate is formed at the N-terminus of the alpha chain, which is derived from the carboxyl end of the proenzyme. The post-translation cleavage follows an unusual pathway, termed non-hydrolytic serinolysis, in which the side chain hydroxyl group of the serine supplies its oxygen atom to form the C-terminus of the beta chain, while the remainder of the serine residue undergoes an oxidative deamination to produce ammonia and the pyruvoyl group blocking the N-terminus of the alpha chain.

It catalyses the reaction S-adenosyl-L-methionine + H(+) = S-adenosyl 3-(methylsulfanyl)propylamine + CO2. It functions in the pathway amine and polyamine biosynthesis; S-adenosylmethioninamine biosynthesis; S-adenosylmethioninamine from S-adenosyl-L-methionine: step 1/1. In terms of biological role, catalyzes the decarboxylation of S-adenosylmethionine to S-adenosylmethioninamine (dcAdoMet), the propylamine donor required for the synthesis of the polyamines spermine and spermidine from the diamine putrescine. The polypeptide is S-adenosylmethionine decarboxylase proenzyme (Shigella dysenteriae serotype 1 (strain Sd197)).